A 274-amino-acid polypeptide reads, in one-letter code: MNPEHSPLGKATVYANQYDASLLFPIPRAGAREQIGIGAPLPFFGTDIWNAYELSWLNARGKPQIAIATFYVPAESPNIVESKSFKLYLGSFAQTAFESADAVRDALKRDVSAACDASVTVRLATPAEFRKLQMDELDGLSLDRLDLDAHVYETDPSFLTASHGEAPVEETLVTDLLKSNCPVTGQPDWGSVQIHYVGAPIDHAGLLRYIISFRNHTGFHEQCVERIFVDILRACQPVKLAVYARYTRRGGLDINPFRTNYNQPMPDNARTARQ.

Val-80 to Ser-82 lines the substrate pocket. Residue Ser-82 to Lys-83 coordinates NADPH. Cys-181 functions as the Thioimide intermediate in the catalytic mechanism. Asp-188 serves as the catalytic Proton donor. Position 220–221 (His-220–Glu-221) interacts with substrate. Arg-249 to Gly-250 serves as a coordination point for NADPH.

The protein belongs to the GTP cyclohydrolase I family. QueF type 2 subfamily. As to quaternary structure, homodimer.

It localises to the cytoplasm. The catalysed reaction is 7-aminomethyl-7-carbaguanine + 2 NADP(+) = 7-cyano-7-deazaguanine + 2 NADPH + 3 H(+). The protein operates within tRNA modification; tRNA-queuosine biosynthesis. Functionally, catalyzes the NADPH-dependent reduction of 7-cyano-7-deazaguanine (preQ0) to 7-aminomethyl-7-deazaguanine (preQ1). This is NADPH-dependent 7-cyano-7-deazaguanine reductase from Burkholderia pseudomallei (strain 1710b).